We begin with the raw amino-acid sequence, 390 residues long: Galactokinase (390 aa).

35 to 38 (EHTD) contacts substrate. 125–131 (GAGLSSS) is an ATP binding site. Ser-131 and Glu-163 together coordinate Mg(2+). The active-site Proton acceptor is Asp-175. A substrate-binding site is contributed by Tyr-224.

Belongs to the GHMP kinase family. GalK subfamily.

The protein resides in the cytoplasm. It carries out the reaction alpha-D-galactose + ATP = alpha-D-galactose 1-phosphate + ADP + H(+). It participates in carbohydrate metabolism; galactose metabolism. Functionally, catalyzes the transfer of the gamma-phosphate of ATP to D-galactose to form alpha-D-galactose-1-phosphate (Gal-1-P). The polypeptide is Galactokinase (Proteus mirabilis (strain HI4320)).